A 368-amino-acid chain; its full sequence is UDP-N-acetylglucosamine--N-acetylmuramyl-(pentapeptide) pyrophosphoryl-undecaprenol N-acetylglucosamine transferase (368 aa).

UDP-N-acetyl-alpha-D-glucosamine is bound by residues 10-12 (TGG), Asn-124, Ser-196, Ile-251, and Gln-296.

The protein belongs to the glycosyltransferase 28 family. MurG subfamily.

The protein localises to the cell membrane. It carries out the reaction Mur2Ac(oyl-L-Ala-gamma-D-Glu-L-Lys-D-Ala-D-Ala)-di-trans,octa-cis-undecaprenyl diphosphate + UDP-N-acetyl-alpha-D-glucosamine = beta-D-GlcNAc-(1-&gt;4)-Mur2Ac(oyl-L-Ala-gamma-D-Glu-L-Lys-D-Ala-D-Ala)-di-trans,octa-cis-undecaprenyl diphosphate + UDP + H(+). Its pathway is cell wall biogenesis; peptidoglycan biosynthesis. In terms of biological role, cell wall formation. Catalyzes the transfer of a GlcNAc subunit on undecaprenyl-pyrophosphoryl-MurNAc-pentapeptide (lipid intermediate I) to form undecaprenyl-pyrophosphoryl-MurNAc-(pentapeptide)GlcNAc (lipid intermediate II). This is UDP-N-acetylglucosamine--N-acetylmuramyl-(pentapeptide) pyrophosphoryl-undecaprenol N-acetylglucosamine transferase from Limosilactobacillus fermentum (strain NBRC 3956 / LMG 18251) (Lactobacillus fermentum).